Reading from the N-terminus, the 253-residue chain is Triosephosphate isomerase (253 aa).

9-11 contributes to the substrate binding site; that stretch reads NWK. Catalysis depends on histidine 97, which acts as the Electrophile. Glutamate 169 functions as the Proton acceptor in the catalytic mechanism. Substrate-binding positions include glycine 175, serine 215, and 236-237; that span reads GG.

This sequence belongs to the triosephosphate isomerase family. In terms of assembly, homodimer.

Its subcellular location is the cytoplasm. It carries out the reaction D-glyceraldehyde 3-phosphate = dihydroxyacetone phosphate. It functions in the pathway carbohydrate biosynthesis; gluconeogenesis. The protein operates within carbohydrate degradation; glycolysis; D-glyceraldehyde 3-phosphate from glycerone phosphate: step 1/1. Functionally, involved in the gluconeogenesis. Catalyzes stereospecifically the conversion of dihydroxyacetone phosphate (DHAP) to D-glyceraldehyde-3-phosphate (G3P). The chain is Triosephosphate isomerase from Staphylococcus saprophyticus subsp. saprophyticus (strain ATCC 15305 / DSM 20229 / NCIMB 8711 / NCTC 7292 / S-41).